Consider the following 215-residue polypeptide: 3-isopropylmalate dehydratase small subunit (215 aa).

It belongs to the LeuD family. LeuD type 1 subfamily. Heterodimer of LeuC and LeuD.

It carries out the reaction (2R,3S)-3-isopropylmalate = (2S)-2-isopropylmalate. It participates in amino-acid biosynthesis; L-leucine biosynthesis; L-leucine from 3-methyl-2-oxobutanoate: step 2/4. Functionally, catalyzes the isomerization between 2-isopropylmalate and 3-isopropylmalate, via the formation of 2-isopropylmaleate. This Polynucleobacter asymbioticus (strain DSM 18221 / CIP 109841 / QLW-P1DMWA-1) (Polynucleobacter necessarius subsp. asymbioticus) protein is 3-isopropylmalate dehydratase small subunit.